A 309-amino-acid chain; its full sequence is Carbamate kinase (309 aa).

It belongs to the carbamate kinase family.

It is found in the cytoplasm. It catalyses the reaction hydrogencarbonate + NH4(+) + ATP = carbamoyl phosphate + ADP + H2O + H(+). It functions in the pathway metabolic intermediate metabolism; carbamoyl phosphate degradation; CO(2) and NH(3) from carbamoyl phosphate: step 1/1. This Staphylococcus haemolyticus (strain JCSC1435) protein is Carbamate kinase (arcC).